The sequence spans 227 residues: Isopentenyl-diphosphate delta-isomerase 2 (227 aa).

Lys36 serves as a coordination point for substrate. His40 and His51 together coordinate Mg(2+). In terms of domain architecture, Nudix hydrolase spans 49 to 199 (LLHRAFSVVL…EVKVTPWLRT (151 aa)). Residues Arg70 and Lys74 each coordinate substrate. Residue Ser86 is part of the active site. Ser87 is a substrate binding site. Mg(2+) is bound by residues Glu146 and Glu148. Residue Glu148 is part of the active site. Residues 225-227 (HRV) carry the Microbody targeting signal motif.

This sequence belongs to the IPP isomerase type 1 family. Mg(2+) serves as cofactor. In terms of tissue distribution, muscle-specific expression.

It is found in the peroxisome. It carries out the reaction isopentenyl diphosphate = dimethylallyl diphosphate. It functions in the pathway isoprenoid biosynthesis; dimethylallyl diphosphate biosynthesis; dimethylallyl diphosphate from isopentenyl diphosphate: step 1/1. Its function is as follows. Catalyzes the 1,3-allylic rearrangement of the homoallylic substrate isopentenyl (IPP) to its highly electrophilic allylic isomer, dimethylallyl diphosphate (DMAPP). This Homo sapiens (Human) protein is Isopentenyl-diphosphate delta-isomerase 2 (IDI2).